Reading from the N-terminus, the 938-residue chain is Isoleucine--tRNA ligase (938 aa).

The short motif at 58 to 68 (PYANGHIHLGT) is the 'HIGH' region element. E565 is an L-isoleucyl-5'-AMP binding site. The short motif at 606–610 (KMSKS) is the 'KMSKS' region element. K609 lines the ATP pocket. Residues C905, C908, C925, and C928 each contribute to the Zn(2+) site.

It belongs to the class-I aminoacyl-tRNA synthetase family. IleS type 1 subfamily. In terms of assembly, monomer. It depends on Zn(2+) as a cofactor.

It is found in the cytoplasm. The enzyme catalyses tRNA(Ile) + L-isoleucine + ATP = L-isoleucyl-tRNA(Ile) + AMP + diphosphate. Functionally, catalyzes the attachment of isoleucine to tRNA(Ile). As IleRS can inadvertently accommodate and process structurally similar amino acids such as valine, to avoid such errors it has two additional distinct tRNA(Ile)-dependent editing activities. One activity is designated as 'pretransfer' editing and involves the hydrolysis of activated Val-AMP. The other activity is designated 'posttransfer' editing and involves deacylation of mischarged Val-tRNA(Ile). The chain is Isoleucine--tRNA ligase from Nitratidesulfovibrio vulgaris (strain DSM 19637 / Miyazaki F) (Desulfovibrio vulgaris).